The following is a 187-amino-acid chain: UPF0301 protein KPK_0728 (187 aa).

It belongs to the UPF0301 (AlgH) family.

This is UPF0301 protein KPK_0728 from Klebsiella pneumoniae (strain 342).